A 256-amino-acid chain; its full sequence is Phosphomannomutase (256 aa).

D12 serves as the catalytic Nucleophile. Mg(2+) contacts are provided by D12 and D14. Catalysis depends on D14, which acts as the Proton donor/acceptor. 6 residues coordinate alpha-D-mannose 1-phosphate: R21, R123, R134, R141, S179, and D181. A Mg(2+)-binding site is contributed by D209.

The protein belongs to the eukaryotic PMM family. In terms of assembly, homodimer.

It localises to the cytoplasm. It carries out the reaction alpha-D-mannose 1-phosphate = D-mannose 6-phosphate. It functions in the pathway nucleotide-sugar biosynthesis; GDP-alpha-D-mannose biosynthesis; alpha-D-mannose 1-phosphate from D-fructose 6-phosphate: step 2/2. Functionally, involved in the synthesis of the GDP-mannose and dolichol-phosphate-mannose required for a number of critical mannosyl transfer reactions. In Encephalitozoon cuniculi (strain GB-M1) (Microsporidian parasite), this protein is Phosphomannomutase (SEC53).